A 168-amino-acid chain; its full sequence is S-ribosylhomocysteine lyase (168 aa).

The Fe cation site is built by H54, H58, and C128.

The protein belongs to the LuxS family. In terms of assembly, homodimer. Fe cation is required as a cofactor.

It carries out the reaction S-(5-deoxy-D-ribos-5-yl)-L-homocysteine = (S)-4,5-dihydroxypentane-2,3-dione + L-homocysteine. In terms of biological role, involved in the synthesis of autoinducer 2 (AI-2) which is secreted by bacteria and is used to communicate both the cell density and the metabolic potential of the environment. The regulation of gene expression in response to changes in cell density is called quorum sensing. Catalyzes the transformation of S-ribosylhomocysteine (RHC) to homocysteine (HC) and 4,5-dihydroxy-2,3-pentadione (DPD). This is S-ribosylhomocysteine lyase from Histophilus somni (strain 2336) (Haemophilus somnus).